We begin with the raw amino-acid sequence, 60 residues long: Small ribosomal subunit protein eS31 (60 aa).

Zn(2+) contacts are provided by C32, C35, C50, and C53. The C4-type zinc finger occupies C32 to C53.

It belongs to the eukaryotic ribosomal protein eS31 family. Part of the 30S ribosomal subunit. Zn(2+) serves as cofactor.

The chain is Small ribosomal subunit protein eS31 from Methanocorpusculum labreanum (strain ATCC 43576 / DSM 4855 / Z).